The primary structure comprises 87 residues: Small ribosomal subunit protein bS20 (87 aa).

The tract at residues 1–21 (MANIKQQIKRNKTNEKRRLKN) is disordered. Positions 7 to 20 (QIKRNKTNEKRRLK) are enriched in basic residues.

The protein belongs to the bacterial ribosomal protein bS20 family.

Binds directly to 16S ribosomal RNA. The chain is Small ribosomal subunit protein bS20 from Phytoplasma mali (strain AT).